We begin with the raw amino-acid sequence, 212 residues long: Probable nicotinate-nucleotide adenylyltransferase (212 aa).

The protein belongs to the NadD family.

The catalysed reaction is nicotinate beta-D-ribonucleotide + ATP + H(+) = deamido-NAD(+) + diphosphate. It functions in the pathway cofactor biosynthesis; NAD(+) biosynthesis; deamido-NAD(+) from nicotinate D-ribonucleotide: step 1/1. In terms of biological role, catalyzes the reversible adenylation of nicotinate mononucleotide (NaMN) to nicotinic acid adenine dinucleotide (NaAD). The sequence is that of Probable nicotinate-nucleotide adenylyltransferase from Shewanella sp. (strain MR-7).